The sequence spans 219 residues: Large ribosomal subunit protein bL31m (219 aa).

Basic and acidic residues-rich tracts occupy residues 169-181 (KKEEEEAAKKAAE) and 210-219 (KETRHYGKKK). 2 disordered regions span residues 169–188 (KKEEEEAAKKAAEAEEADPF) and 200–219 (TENMNPGLNFKETRHYGKKK).

Belongs to the bacterial ribosomal protein bL31 family. Highly divergent. In terms of assembly, component of the mitochondrial large ribosomal subunit (mt-LSU). Mature N.crassa 74S mitochondrial ribosomes consist of a small (37S) and a large (54S) subunit. The 37S small subunit contains a 16S ribosomal RNA (16S mt-rRNA) and 32 different proteins. The 54S large subunit contains a 23S rRNA (23S mt-rRNA) and 42 different proteins. bL31m bridges the mt-LSU central protuberance and the mt-SSU head.

Its subcellular location is the mitochondrion. Its function is as follows. Component of the mitochondrial ribosome (mitoribosome), a dedicated translation machinery responsible for the synthesis of mitochondrial genome-encoded proteins, including at least some of the essential transmembrane subunits of the mitochondrial respiratory chain. The mitoribosomes are attached to the mitochondrial inner membrane and translation products are cotranslationally integrated into the membrane. The protein is Large ribosomal subunit protein bL31m (mrpl36) of Neurospora crassa (strain ATCC 24698 / 74-OR23-1A / CBS 708.71 / DSM 1257 / FGSC 987).